Here is a 101-residue protein sequence, read N- to C-terminus: Small ribosomal subunit protein uS14 (101 aa).

Belongs to the universal ribosomal protein uS14 family. As to quaternary structure, part of the 30S ribosomal subunit. Contacts proteins S3 and S10.

Binds 16S rRNA, required for the assembly of 30S particles and may also be responsible for determining the conformation of the 16S rRNA at the A site. This Buchnera aphidicola subsp. Acyrthosiphon pisum (strain APS) (Acyrthosiphon pisum symbiotic bacterium) protein is Small ribosomal subunit protein uS14.